The sequence spans 363 residues: 3-dehydroquinate synthase (363 aa).

NAD(+) is bound by residues 75–80 (DAEEGK), 109–113 (GAVTD), 133–134 (TS), lysine 146, lysine 155, and 173–176 (TLST). Residues glutamate 188, histidine 251, and histidine 267 each contribute to the Zn(2+) site.

This sequence belongs to the sugar phosphate cyclases superfamily. Dehydroquinate synthase family. It depends on Co(2+) as a cofactor. Zn(2+) is required as a cofactor. NAD(+) serves as cofactor.

The protein resides in the cytoplasm. The catalysed reaction is 7-phospho-2-dehydro-3-deoxy-D-arabino-heptonate = 3-dehydroquinate + phosphate. Its pathway is metabolic intermediate biosynthesis; chorismate biosynthesis; chorismate from D-erythrose 4-phosphate and phosphoenolpyruvate: step 2/7. In terms of biological role, catalyzes the conversion of 3-deoxy-D-arabino-heptulosonate 7-phosphate (DAHP) to dehydroquinate (DHQ). The polypeptide is 3-dehydroquinate synthase (Arthrobacter sp. (strain FB24)).